The primary structure comprises 392 residues: ATP phosphoribosyltransferase regulatory subunit (392 aa).

This sequence belongs to the class-II aminoacyl-tRNA synthetase family. HisZ subfamily. As to quaternary structure, heteromultimer composed of HisG and HisZ subunits.

It localises to the cytoplasm. The protein operates within amino-acid biosynthesis; L-histidine biosynthesis; L-histidine from 5-phospho-alpha-D-ribose 1-diphosphate: step 1/9. Its function is as follows. Required for the first step of histidine biosynthesis. May allow the feedback regulation of ATP phosphoribosyltransferase activity by histidine. The protein is ATP phosphoribosyltransferase regulatory subunit of Marinomonas sp. (strain MWYL1).